Reading from the N-terminus, the 259-residue chain is Global transcriptional regulator CodY (259 aa).

Residues 1–155 (MELLAKTRKL…SSTVVGMEIL (155 aa)) are GAF domain. The H-T-H motif DNA-binding region spans 203-222 (ASKIADRVGITRSVIVNALR). Position 215 is a phosphoserine (Ser-215).

Belongs to the CodY family.

It is found in the cytoplasm. DNA-binding global transcriptional regulator which is involved in the adaptive response to starvation and acts by directly or indirectly controlling the expression of numerous genes in response to nutrient availability. During rapid exponential growth, CodY is highly active and represses genes whose products allow adaptation to nutrient depletion. This chain is Global transcriptional regulator CodY, found in Bacillus cereus (strain B4264).